Reading from the N-terminus, the 540-residue chain is Bifunctional purine biosynthesis protein PurH (540 aa).

One can recognise an MGS-like domain in the interval 1 to 144; sequence MKRALISVYD…KNYQDVGVVV (144 aa). The disordered stretch occupies residues 204–224; sequence ETAPERPIGADPGPQKPAAPS.

Belongs to the PurH family.

It carries out the reaction (6R)-10-formyltetrahydrofolate + 5-amino-1-(5-phospho-beta-D-ribosyl)imidazole-4-carboxamide = 5-formamido-1-(5-phospho-D-ribosyl)imidazole-4-carboxamide + (6S)-5,6,7,8-tetrahydrofolate. It catalyses the reaction IMP + H2O = 5-formamido-1-(5-phospho-D-ribosyl)imidazole-4-carboxamide. It functions in the pathway purine metabolism; IMP biosynthesis via de novo pathway; 5-formamido-1-(5-phospho-D-ribosyl)imidazole-4-carboxamide from 5-amino-1-(5-phospho-D-ribosyl)imidazole-4-carboxamide (10-formyl THF route): step 1/1. The protein operates within purine metabolism; IMP biosynthesis via de novo pathway; IMP from 5-formamido-1-(5-phospho-D-ribosyl)imidazole-4-carboxamide: step 1/1. In Symbiobacterium thermophilum (strain DSM 24528 / JCM 14929 / IAM 14863 / T), this protein is Bifunctional purine biosynthesis protein PurH.